We begin with the raw amino-acid sequence, 315 residues long: Protein sprouty homolog 2 (315 aa).

The segment covering 1 to 15 (MEARAQSGNGSQPLL) has biased composition (polar residues). Disordered regions lie at residues 1–39 (MEAR…QQVH) and 51–140 (NTNE…GSSF). Residues 20–32 (DGGRQRGEPDPRD) show a composition bias toward basic and acidic residues. Over residues 108–140 (SRSISTVSSGSRSSTRTSTSSSSSEQRLLGSSF) the composition is skewed to low complexity. The tract at residues 118 to 315 (SRSSTRTSTS…VPPRNFEKPT (198 aa)) is required for interaction with CAV1. Positions 177 to 291 (RCEDCGKCKC…CYDRVNRPGC (115 aa)) constitute an SPR domain. The interval 178–315 (CEDCGKCKCK…VPPRNFEKPT (138 aa)) is required for interaction with TESK1.

The protein belongs to the sprouty family. Forms heterodimers with SPRY1. Forms a tripartite complex containing GAB1, METTL13 and SPRY2. Within the complex interacts with METTL13. Interacts with RAF1. Interacts (via C-terminus) with TESK1 (via C-terminus); the interaction disrupts SPRY2 interaction with GRB2, potentially via disruption of SPRY2 serine dephosphorylation. Interacts with PPP2R1A/PP2A-A and PPP2CA/PP2A-C; the interaction with PPP2CA/PP2A-C is inhibited by interaction with TESK1, possibly by vesicular sequestration of SPRY2. Inhibition of the interaction with the serine/threonine-protein phosphatase 2A (PP2A) holoenzyme results in loss of PP2A-mediated dephosphorylation, resulting in the loss of SPRY2 interaction with GRB2. Interacts with GRB2. Interacts with CBL/C-CBL; the interaction inhibits CBL-mediated ubiquitination of EGFR. Interacts (via C-terminus) with CAV1 (via C-terminus). In terms of processing, cleaved at Pro-144 by the prolyl endopeptidase FAP (seprase) activity (in vitro).

The protein localises to the cytoplasm. The protein resides in the cytoskeleton. It is found in the cell projection. Its subcellular location is the ruffle membrane. Its function is as follows. Antagonist of fibroblast growth factor (FGF) pathways via inhibition of FGF-mediated phosphorylation of ERK1/2. Thereby acts as an antagonist of FGF-induced retinal lens fiber differentiation, may inhibit limb bud outgrowth and may negatively modulate respiratory organogenesis. Inhibits TGFB-induced epithelial-to-mesenchymal transition in retinal lens epithelial cells. Inhibits CBL/C-CBL-mediated EGFR ubiquitination. The polypeptide is Protein sprouty homolog 2 (SPRY2) (Macaca fascicularis (Crab-eating macaque)).